We begin with the raw amino-acid sequence, 212 residues long: High frequency lysogenization protein HflD homolog (212 aa).

The stretch at 92–128 (LIALERKLNAKSAALDELGKRIGQLERQLEHFELLSE) forms a coiled coil.

This sequence belongs to the HflD family.

It is found in the cytoplasm. The protein localises to the cell inner membrane. In Pectobacterium atrosepticum (strain SCRI 1043 / ATCC BAA-672) (Erwinia carotovora subsp. atroseptica), this protein is High frequency lysogenization protein HflD homolog.